A 255-amino-acid chain; its full sequence is Ras-like protein family member 12 (255 aa).

Residues 30–37 (GAMGSGKS), 77–81 (DTADQ), and 137–140 (NKVD) contribute to the GTP site.

The protein belongs to the small GTPase superfamily. Ras family.

It carries out the reaction GTP + H2O = GDP + phosphate + H(+). The protein is Ras-like protein family member 12 (RASL12) of Danio rerio (Zebrafish).